Reading from the N-terminus, the 207-residue chain is Outer-membrane lipoprotein LolB (207 aa).

An N-terminal signal peptide occupies residues 1 to 21 (MPQPDFRLIRLLPLAALVLTA). Residue C22 is the site of N-palmitoyl cysteine attachment. Residue C22 is the site of S-diacylglycerol cysteine attachment.

This sequence belongs to the LolB family. As to quaternary structure, monomer.

It localises to the cell outer membrane. Functionally, plays a critical role in the incorporation of lipoproteins in the outer membrane after they are released by the LolA protein. The protein is Outer-membrane lipoprotein LolB of Shigella sonnei (strain Ss046).